Reading from the N-terminus, the 206-residue chain is Pyridoxine/pyridoxamine 5'-phosphate oxidase (206 aa).

Residues 53–58 (RMVLLK), 68–69 (YT), lysine 75, and glutamine 97 contribute to the FMN site. Lysine 58 lines the substrate pocket. The substrate site is built by tyrosine 115, arginine 119, and serine 123. Residues 132 to 133 (QS) and tryptophan 177 contribute to the FMN site. 183-185 (RLH) contributes to the substrate binding site. An FMN-binding site is contributed by arginine 187.

Belongs to the pyridoxamine 5'-phosphate oxidase family. As to quaternary structure, homodimer. FMN is required as a cofactor.

It carries out the reaction pyridoxamine 5'-phosphate + O2 + H2O = pyridoxal 5'-phosphate + H2O2 + NH4(+). The enzyme catalyses pyridoxine 5'-phosphate + O2 = pyridoxal 5'-phosphate + H2O2. It participates in cofactor metabolism; pyridoxal 5'-phosphate salvage; pyridoxal 5'-phosphate from pyridoxamine 5'-phosphate: step 1/1. It functions in the pathway cofactor metabolism; pyridoxal 5'-phosphate salvage; pyridoxal 5'-phosphate from pyridoxine 5'-phosphate: step 1/1. Its function is as follows. Catalyzes the oxidation of either pyridoxine 5'-phosphate (PNP) or pyridoxamine 5'-phosphate (PMP) into pyridoxal 5'-phosphate (PLP). The sequence is that of Pyridoxine/pyridoxamine 5'-phosphate oxidase from Allorhizobium ampelinum (strain ATCC BAA-846 / DSM 112012 / S4) (Agrobacterium vitis (strain S4)).